Here is a 124-residue protein sequence, read N- to C-terminus: Tax1-binding protein 3 homolog (124 aa).

The 89-residue stretch at 18–106 (AVELHKQEVI…DRAVKFIKQS (89 aa)) folds into the PDZ domain.

Functionally, may regulate a number of protein-protein interactions by competing for PDZ domain binding sites. This is Tax1-binding protein 3 homolog from Caenorhabditis elegans.